We begin with the raw amino-acid sequence, 490 residues long: Stomatal closure-related actin-binding protein 3 (490 aa).

The protein belongs to the SCAB family. In terms of tissue distribution, expressed in roots, stems, leaves, siliques and flowers.

The protein localises to the cytoplasm. It localises to the cytoskeleton. Functionally, probable plant-specific actin binding protein that bundles and stabilizes microfilaments (MFs). This chain is Stomatal closure-related actin-binding protein 3, found in Arabidopsis thaliana (Mouse-ear cress).